We begin with the raw amino-acid sequence, 140 residues long: Phosphoribosyl-AMP cyclohydrolase (140 aa).

Aspartate 85 serves as a coordination point for Mg(2+). Cysteine 86 lines the Zn(2+) pocket. Residues aspartate 87 and aspartate 89 each contribute to the Mg(2+) site. Positions 102 and 109 each coordinate Zn(2+).

The protein belongs to the PRA-CH family. Homodimer. Requires Mg(2+) as cofactor. Zn(2+) is required as a cofactor.

It localises to the cytoplasm. The enzyme catalyses 1-(5-phospho-beta-D-ribosyl)-5'-AMP + H2O = 1-(5-phospho-beta-D-ribosyl)-5-[(5-phospho-beta-D-ribosylamino)methylideneamino]imidazole-4-carboxamide. The protein operates within amino-acid biosynthesis; L-histidine biosynthesis; L-histidine from 5-phospho-alpha-D-ribose 1-diphosphate: step 3/9. Functionally, catalyzes the hydrolysis of the adenine ring of phosphoribosyl-AMP. The sequence is that of Phosphoribosyl-AMP cyclohydrolase from Bradyrhizobium diazoefficiens (strain JCM 10833 / BCRC 13528 / IAM 13628 / NBRC 14792 / USDA 110).